We begin with the raw amino-acid sequence, 509 residues long: Cytochrome P450 monooxygenase aba1 (509 aa).

Positions 1–31 (MSNSILNLGSFACLLSLGSIVLWYTISAVLA) are cleaved as a signal peptide. N-linked (GlcNAc...) asparagine glycosylation occurs at Asn-402. Residue Cys-451 participates in heme binding. Asn-462 carries an N-linked (GlcNAc...) asparagine glycan.

This sequence belongs to the cytochrome P450 family. The cofactor is heme.

The protein operates within hormone biosynthesis. Cytochrome P450 monooxygenase; part of the gene cluster that mediates the biosynthesis of abscisic acid (ABA), a phytohormone that acts antagonistically toward salicylic acid (SA), jasmonic acid (JA) and ethylene (ETH) signaling, to impede plant defense responses. The first step of the pathway catalyzes the reaction from farnesyl diphosphate to alpha-ionylideneethane performed by the alpha-ionylideneethane synthase aba3 via a three-step reaction mechanism involving 2 neutral intermediates, beta-farnesene and allofarnesene. The cytochrome P450 monooxygenase aba1 might then be involved in the conversion of alpha-ionylideneethane to alpha-ionylideneacetic acid. Alpha-ionylideneacetic acid is further converted to abscisic acid in 2 steps involving the cytochrome P450 monooxygenase aba2 and the short-chain dehydrogenase/reductase aba4, via the intermediates 1'-deoxy-ABA or 1',4'-trans-diol-ABA, depending on the order of action of these 2 enzymes. Aba2 is responsible for the hydroxylation of carbon atom C-1' and aba4 might be involved in the oxidation of the C-4' carbon atom. This Botryotinia fuckeliana (strain B05.10) (Noble rot fungus) protein is Cytochrome P450 monooxygenase aba1 (aba1).